We begin with the raw amino-acid sequence, 201 residues long: 3-isopropylmalate dehydratase small subunit (201 aa).

It belongs to the LeuD family. LeuD type 1 subfamily. Heterodimer of LeuC and LeuD.

It carries out the reaction (2R,3S)-3-isopropylmalate = (2S)-2-isopropylmalate. The protein operates within amino-acid biosynthesis; L-leucine biosynthesis; L-leucine from 3-methyl-2-oxobutanoate: step 2/4. Its function is as follows. Catalyzes the isomerization between 2-isopropylmalate and 3-isopropylmalate, via the formation of 2-isopropylmaleate. This Azorhizobium caulinodans (strain ATCC 43989 / DSM 5975 / JCM 20966 / LMG 6465 / NBRC 14845 / NCIMB 13405 / ORS 571) protein is 3-isopropylmalate dehydratase small subunit.